We begin with the raw amino-acid sequence, 495 residues long: MGNILKCFISCFDGEDEDGGSGHGRFPNSYPPVSSLHYQPLHLDDLQVPLSPPPPSTRQQQPPPRPALSRLHYQPLRLADLQVPLSPPPPSTRQQQLPPRPARPLGYHHGVLWPTIEITPCDDFLNLEFTTKVCEGPQHHSTPSRKTDLNRCIHEKDDGNSKPSYYWLTKNKDNHVVTPQTKRSPRPPSGVAALERDLVDFTRTFEVPEGLAQHVTSPMQAQVTWYRKLLAAYKDIKYPPKESADAAVLVAATLRGIERTNLEGILAFYGFPIPTISKEASENHPSSIPKGVLFVLKTLPVNAKCIVDGDGFTAYVDTLDPIELRQDCNASCQSRNSKKQKLWDKTAADLQISLENTGQKKMFFGGREILARKYEIRLRGIDAPEIGMQYGKESQDALVKLIARKCVTLHVYGQDQFKRFVCDIHCGGVFIQEQMLVNGHAWHFKNYDKRPQFAKWEKMARDARQGLWAYDNLEKPWEWRKNKRKASRHHNSDVR.

Gly-2 carries N-myristoyl glycine lipidation. Cys-11 carries the S-palmitoyl cysteine lipid modification. Disordered regions lie at residues 45–68 (DLQV…RPAL) and 81–101 (LQVP…PPRP). A compositionally biased stretch (pro residues) spans 50 to 66 (LSPPPPSTRQQQPPPRP). The TNase-like domain occupies 297-470 (KTLPVNAKCI…RDARQGLWAY (174 aa)). Asp-310 is a binding site for Ca(2+). Residue Arg-377 is part of the active site. Position 382 (Asp-382) interacts with Ca(2+). Active-site residues include Glu-385 and Arg-419.

This sequence belongs to the thermonuclease family. Ca(2+) is required as a cofactor.

The protein resides in the cell membrane. Its function is as follows. Enzyme that catalyzes the hydrolysis of both DNA and RNA at the 5' position of the phosphodiester bond. The sequence is that of Probable staphylococcal-like nuclease CAN4 from Oryza sativa subsp. japonica (Rice).